The following is a 65-amino-acid chain: Beta-mammal toxin Tma1 (65 aa).

An LCN-type CS-alpha/beta domain is found at 2–64; that stretch reads KEGYLVGNDG…TWNSAKNRCG (63 aa). 4 cysteine pairs are disulfide-bonded: Cys12-Cys63, Cys16-Cys38, Cys24-Cys44, and Cys28-Cys46.

This sequence belongs to the long (4 C-C) scorpion toxin superfamily. Sodium channel inhibitor family. Expressed by the venom gland.

It is found in the secreted. Functionally, beta toxins bind voltage-independently at site-4 of sodium channels (Nav) and shift the voltage of activation toward more negative potentials thereby affecting sodium channel activation and promoting spontaneous and repetitive firing. This toxin acts on human Nav1.4/SCN4A and Nav1.6/SCN8A voltage-gated sodium channels. This chain is Beta-mammal toxin Tma1, found in Tityus macrochirus (Scorpion).